The chain runs to 57 residues: uncharacterized protein (57 aa).

The chain crosses the membrane as a helical span at residues 34–51 (TALLDAAAVVVVPGLLAA).

It is found in the membrane. This is an uncharacterized protein from Dictyostelium discoideum (Social amoeba).